A 147-amino-acid polypeptide reads, in one-letter code: Myoglobin (147 aa).

Positions 2–141 (ADFDAVLKCW…IIADLEANYK (140 aa)) constitute a Globin domain. His60 is a binding site for nitrite. His60 is a binding site for O2. A heme b-binding site is contributed by His89.

The protein belongs to the globin family. Monomeric.

The protein localises to the cytoplasm. The protein resides in the sarcoplasm. The enzyme catalyses Fe(III)-heme b-[protein] + nitric oxide + H2O = Fe(II)-heme b-[protein] + nitrite + 2 H(+). The catalysed reaction is H2O2 + AH2 = A + 2 H2O. Monomeric heme protein which primary function is to store oxygen and facilitate its diffusion within muscle tissues. Reversibly binds oxygen through a pentacoordinated heme iron and enables its timely and efficient release as needed during periods of heightened demand. Depending on the oxidative conditions of tissues and cells, and in addition to its ability to bind oxygen, it also has a nitrite reductase activity whereby it regulates the production of bioactive nitric oxide. Under stress conditions, like hypoxia and anoxia, it also protects cells against reactive oxygen species thanks to its pseudoperoxidase activity. The sequence is that of Myoglobin (mb) from Thunnus obesus (Bigeye tuna).